Consider the following 624-residue polypeptide: Interleukin-1 receptor-associated kinase-like 2 (624 aa).

The 82-residue stretch at 13–94 (LDDLCRNIDT…RAAQIVLSWK (82 aa)) folds into the Death domain. The region spanning 210–475 (FDQSHRISEG…LPEACAETWA (266 aa)) is the Protein kinase domain. ATP contacts are provided by residues 216-224 (ISEGTFADI), Lys237, and 337-340 (KSAN). Disordered stretches follow at residues 508 to 536 (SLPW…NSSL) and 549 to 593 (RVSS…ETSW). Polar residues predominate over residues 558 to 577 (GNGTAQPSTSGRQEADSSSE).

The protein belongs to the protein kinase superfamily. TKL Ser/Thr protein kinase family. Pelle subfamily. As to quaternary structure, interacts with MYD88. IL-1 stimulation leads to the formation of a signaling complex which dissociates from the IL-1 receptor following the binding of PELI1.

Binds to the IL-1 type I receptor following IL-1 engagement, triggering intracellular signaling cascades leading to transcriptional up-regulation and mRNA stabilization. The protein is Interleukin-1 receptor-associated kinase-like 2 (Irak2) of Rattus norvegicus (Rat).